Consider the following 218-residue polypeptide: Adenylate kinase (218 aa).

10 to 15 provides a ligand contact to ATP; that stretch reads GAGKGT. The segment at 30–59 is NMP; sequence STGDMFRAAMADQTDLGVKAKAFIDKGELV. Residues Thr31, Arg36, 57 to 59, 85 to 88, and Gln92 contribute to the AMP site; these read ELV and GFPR. An LID region spans residues 126–164; it reads GRFICKTCGATYHKLYHPTQVEGTCDRCGGHVFFQREDD. Residue Arg127 coordinates ATP. Zn(2+) contacts are provided by Cys130 and Cys133. 136–137 serves as a coordination point for ATP; that stretch reads TY. The Zn(2+) site is built by Cys150 and Cys153. AMP contacts are provided by Arg161 and Arg172. Gln200 contributes to the ATP binding site.

It belongs to the adenylate kinase family. As to quaternary structure, monomer.

Its subcellular location is the cytoplasm. The enzyme catalyses AMP + ATP = 2 ADP. It functions in the pathway purine metabolism; AMP biosynthesis via salvage pathway; AMP from ADP: step 1/1. Its function is as follows. Catalyzes the reversible transfer of the terminal phosphate group between ATP and AMP. Plays an important role in cellular energy homeostasis and in adenine nucleotide metabolism. This chain is Adenylate kinase, found in Latilactobacillus sakei subsp. sakei (strain 23K) (Lactobacillus sakei subsp. sakei).